The primary structure comprises 472 residues: Interferon-induced protein with tetratricopeptide repeats 2 (472 aa).

An N-acetylserine modification is found at serine 2. TPR repeat units lie at residues 51–89 (ATMC…ADQA), 90–135 (EIRS…RIES), 136–171 (PELD…KPKN), 172–208 (PEFT…NPDN), 247–280 (TDVL…IPNN), 281–335 (AYLH…NLFR), 336–366 (VCSI…KELT), 367–405 (PVAK…NQKS), and 406–448 (REKE…KMQQ). A disordered region spans residues 446-472 (MQQADEDSERGLESGSLIPSASSWNGE). A compositionally biased stretch (polar residues) spans 462–472 (LIPSASSWNGE).

The protein belongs to the IFIT family. As to quaternary structure, domain-swapped homodimer. Component of an interferon-dependent multiprotein complex, at least composed of IFIT1, IFIT2 and IFIT3. Interacts with IFIT1 and IFIT3. Interacts with STING1/MITA and disrupts its interaction with MAVS or TBK1. Interacts with EIF3E and EIF3C.

It localises to the cytoplasm. It is found in the endoplasmic reticulum. In terms of biological role, IFN-induced antiviral protein which inhibits expression of viral messenger RNAs lacking 2'-O-methylation of the 5' cap. The ribose 2'-O-methylation would provide a molecular signature to distinguish between self and non-self mRNAs by the host during viral infection. Viruses evolved several ways to evade this restriction system such as encoding their own 2'-O-methylase for their mRNAs or by stealing host cap containing the 2'-O-methylation (cap snatching mechanism). Binds AU-rich viral RNAs, with or without 5' triphosphorylation, RNA-binding is required for antiviral activity. Can promote apoptosis. In Homo sapiens (Human), this protein is Interferon-induced protein with tetratricopeptide repeats 2 (IFIT2).